The following is a 462-amino-acid chain: Fumarate hydratase class II (462 aa).

Substrate is bound by residues 97-99 (SGT), 127-130 (HPND), 137-139 (SSN), and T185. The Proton donor/acceptor role is filled by H186. S316 is an active-site residue. Residues S317 and 322 to 324 (KVN) each bind substrate.

This sequence belongs to the class-II fumarase/aspartase family. Fumarase subfamily. In terms of assembly, homotetramer.

Its subcellular location is the cytoplasm. It catalyses the reaction (S)-malate = fumarate + H2O. Its pathway is carbohydrate metabolism; tricarboxylic acid cycle; (S)-malate from fumarate: step 1/1. Functionally, involved in the TCA cycle. Catalyzes the stereospecific interconversion of fumarate to L-malate. This is Fumarate hydratase class II from Bacillus cereus (strain ATCC 14579 / DSM 31 / CCUG 7414 / JCM 2152 / NBRC 15305 / NCIMB 9373 / NCTC 2599 / NRRL B-3711).